A 353-amino-acid polypeptide reads, in one-letter code: Phenol 2-monooxygenase, reductase component DmpP (353 aa).

A 2Fe-2S ferredoxin-type domain is found at 3-93; the sequence is YNVTIEPTGE…DLVIEADVDA (91 aa). Cys37, Cys42, Cys45, and Cys77 together coordinate [2Fe-2S] cluster. An FAD-binding FR-type domain is found at 102–201; it reads VEDYRGVVSA…SGPYGQFFVR (100 aa).

As to quaternary structure, the multicomponent enzyme phenol hydroxylase is formed by DmpL (P1 component), DmpM (P2 component), DmpN (P3 component), DmpO (P4 component) and DmpP (P5 component). The cofactor is FAD. Requires [2Fe-2S] cluster as cofactor.

The catalysed reaction is phenol + NADH + O2 + H(+) = catechol + NAD(+) + H2O. It functions in the pathway aromatic compound metabolism; phenol degradation. Part of a multicomponent enzyme which catalyzes the degradation of phenol and some of its methylated derivatives. DmpP probably transfers electrons from NADH, via FAD and the iron-sulfur center, to the oxygenase component of the complex. Required for growth on phenol and for in vitro phenol hydroxylase activity. The sequence is that of Phenol 2-monooxygenase, reductase component DmpP from Pseudomonas sp. (strain CF600).